The following is an 838-amino-acid chain: Serine/threonine-protein phosphatase 4 regulatory subunit 3 (838 aa).

Disordered stretches follow at residues 452 to 482 (NNCN…SPSR) and 745 to 838 (AINK…SESS). Residues 747–761 (NKQQDNNGERNTTTG) show a composition bias toward polar residues. Acidic residues predominate over residues 783-792 (SDGENNENNE).

In terms of assembly, regulatory subunit 3 (R3) of the histone H2A phosphatase complex (HTP-C) consisting of PPH3, PSY2 and PSY4.

Its subcellular location is the nucleus. In terms of biological role, core regulatory subunit of the histone H2A phosphatase complex, which dephosphorylates H2AS128ph (gamma-H2A) that has been displaced from sites of DNA lesions in the double-stranded DNA break repair process. Dephosphorylation is necessary for efficient recovery from the DNA damage checkpoint. In Eremothecium gossypii (strain ATCC 10895 / CBS 109.51 / FGSC 9923 / NRRL Y-1056) (Yeast), this protein is Serine/threonine-protein phosphatase 4 regulatory subunit 3 (PSY2).